Here is a 152-residue protein sequence, read N- to C-terminus: UPF0178 protein Shewmr7_1635 (152 aa).

This sequence belongs to the UPF0178 family.

This is UPF0178 protein Shewmr7_1635 from Shewanella sp. (strain MR-7).